Here is a 186-residue protein sequence, read N- to C-terminus: Peptidyl-tRNA hydrolase (186 aa).

Tyr14 provides a ligand contact to tRNA. Catalysis depends on His19, which acts as the Proton acceptor. Positions 64, 66, and 113 each coordinate tRNA.

This sequence belongs to the PTH family. As to quaternary structure, monomer.

Its subcellular location is the cytoplasm. The enzyme catalyses an N-acyl-L-alpha-aminoacyl-tRNA + H2O = an N-acyl-L-amino acid + a tRNA + H(+). Functionally, hydrolyzes ribosome-free peptidyl-tRNAs (with 1 or more amino acids incorporated), which drop off the ribosome during protein synthesis, or as a result of ribosome stalling. Catalyzes the release of premature peptidyl moieties from peptidyl-tRNA molecules trapped in stalled 50S ribosomal subunits, and thus maintains levels of free tRNAs and 50S ribosomes. This chain is Peptidyl-tRNA hydrolase, found in Agathobacter rectalis (strain ATCC 33656 / DSM 3377 / JCM 17463 / KCTC 5835 / VPI 0990) (Eubacterium rectale).